A 169-amino-acid chain; its full sequence is Putative tRNA (cytidine(34)-2'-O)-methyltransferase (169 aa).

4 residues coordinate S-adenosyl-L-methionine: Ile-79, Gly-104, Ile-125, and Ser-133.

Belongs to the class IV-like SAM-binding methyltransferase superfamily. RNA methyltransferase TrmH family. TrmL subfamily.

It localises to the cytoplasm. The enzyme catalyses cytidine(34) in tRNA + S-adenosyl-L-methionine = 2'-O-methylcytidine(34) in tRNA + S-adenosyl-L-homocysteine + H(+). It catalyses the reaction 5-carboxymethylaminomethyluridine(34) in tRNA(Leu) + S-adenosyl-L-methionine = 5-carboxymethylaminomethyl-2'-O-methyluridine(34) in tRNA(Leu) + S-adenosyl-L-homocysteine + H(+). Could methylate the ribose at the nucleotide 34 wobble position in tRNA. This Listeria innocua serovar 6a (strain ATCC BAA-680 / CLIP 11262) protein is Putative tRNA (cytidine(34)-2'-O)-methyltransferase.